Consider the following 67-residue polypeptide: Cold shock protein (67 aa).

The region spanning 4–64 (GTVKWFNAEK…GAKGPQATGV (61 aa)) is the CSD domain.

It is found in the cytoplasm. This is Cold shock protein (csp) from Arthrobacter globiformis.